Here is a 185-residue protein sequence, read N- to C-terminus: Male-enhanced antigen 1 (185 aa).

Disordered stretches follow at residues 1–90 (MGPE…VGDG) and 104–134 (GLHLPDPPLESEDEDEEGATALNNHSSIPMD). 2 stretches are compositionally biased toward acidic residues: residues 50–60 (SSEEPEEEQEE) and 112–121 (LESEDEDEEG). Residue Ser-114 is modified to Phosphoserine.

In terms of tissue distribution, highly expressed in testis.

Its function is as follows. May play an important role in spermatogenesis and/or testis development. The sequence is that of Male-enhanced antigen 1 (MEA1) from Homo sapiens (Human).